The chain runs to 523 residues: Putative L-type lectin-domain containing receptor kinase V.6 (523 aa).

Positions 1–27 are cleaved as a signal peptide; the sequence is MFSEVKVLQIVLVQWLTLFSFTYNSHG. The legume-lectin like stretch occupies residues 28–242; the sequence is TYILDGSAVF…TGSIRALHYM (215 aa). Residues 28–279 lie on the Extracellular side of the membrane; sequence TYILDGSAVF…KPSDRLRTVL (252 aa). N-linked (GlcNAc...) asparagine glycans are attached at residues asparagine 47, asparagine 59, asparagine 112, and asparagine 171. Residues 280–300 traverse the membrane as a helical segment; that stretch reads AVCLTLALFAVFLASGIGFVF. Over 301-523 the chain is Cytoplasmic; sequence YLRHKKVKEV…TGRAVRVKFF (223 aa). A Protein kinase domain is found at 335–523; that stretch reads FKEKQLLGKG…TGRAVRVKFF (189 aa). ATP contacts are provided by residues 341-349 and lysine 364; that span reads LGKGGFGQV. The active-site Proton acceptor is aspartate 464.

This sequence in the C-terminal section; belongs to the protein kinase superfamily. Ser/Thr protein kinase family. It in the N-terminal section; belongs to the leguminous lectin family.

Its subcellular location is the cell membrane. The enzyme catalyses L-seryl-[protein] + ATP = O-phospho-L-seryl-[protein] + ADP + H(+). The catalysed reaction is L-threonyl-[protein] + ATP = O-phospho-L-threonyl-[protein] + ADP + H(+). The sequence is that of Putative L-type lectin-domain containing receptor kinase V.6 (LECRK56) from Arabidopsis thaliana (Mouse-ear cress).